Reading from the N-terminus, the 72-residue chain is Large ribosomal subunit protein uL29 (72 aa).

The protein belongs to the universal ribosomal protein uL29 family.

The protein is Large ribosomal subunit protein uL29 of Caldicellulosiruptor saccharolyticus (strain ATCC 43494 / DSM 8903 / Tp8T 6331).